The sequence spans 201 residues: Small ribosomal subunit protein uS4c (201 aa).

A disordered region spans residues 15–44 (LGALPGLTSKRPRSGSDLRNQSRSGKKSQY). Residues 89-150 (MRLDNILFRL…EQRSRALIQN (62 aa)) enclose the S4 RNA-binding domain.

This sequence belongs to the universal ribosomal protein uS4 family. Part of the 30S ribosomal subunit. Contacts protein S5. The interaction surface between S4 and S5 is involved in control of translational fidelity.

The protein localises to the plastid. The protein resides in the chloroplast. Functionally, one of the primary rRNA binding proteins, it binds directly to 16S rRNA where it nucleates assembly of the body of the 30S subunit. With S5 and S12 plays an important role in translational accuracy. The protein is Small ribosomal subunit protein uS4c (rps4) of Calycanthus floridus var. glaucus (Eastern sweetshrub).